We begin with the raw amino-acid sequence, 108 residues long: Ig kappa chain V region 120 (108 aa).

The framework-1 stretch occupies residues 1-23 (AFELTQTPSSVEAAVGGTVTIKC). Positions 24–34 (QSSQSIGTYLA) are complementarity-determining-1. Residues 35–49 (WYZZKPGQPPKLLIY) form a framework-2 region. Residues 50–56 (RASTLAS) are complementarity-determining-2. The segment at 57–88 (GVSSRFKGSGSGTEFTLTISGVECADAATYYC) is framework-3. The tract at residues 89-97 (QGTYYZSAS) is complementarity-determining-3. The interval 98 to 107 (FGGGTEVVVK) is framework-4.

In Oryctolagus cuniculus (Rabbit), this protein is Ig kappa chain V region 120.